Reading from the N-terminus, the 507-residue chain is Glycogen synthase (507 aa).

ADP-alpha-D-glucose is bound at residue Lys15.

This sequence belongs to the glycosyltransferase 1 family. Bacterial/plant glycogen synthase subfamily.

The enzyme catalyses [(1-&gt;4)-alpha-D-glucosyl](n) + ADP-alpha-D-glucose = [(1-&gt;4)-alpha-D-glucosyl](n+1) + ADP + H(+). It participates in glycan biosynthesis; glycogen biosynthesis. Its function is as follows. Synthesizes alpha-1,4-glucan chains using ADP-glucose. In Rhodopirellula baltica (strain DSM 10527 / NCIMB 13988 / SH1), this protein is Glycogen synthase.